We begin with the raw amino-acid sequence, 2085 residues long: Protein MLP1 homolog (2085 aa).

Coiled coils occupy residues 44–367 (KIRE…SHDG), 399–513 (KATQ…HVLI), 568–630 (YELQ…RMKS), 675–1205 (ANEA…KRTQ), 1232–1667 (LRRE…LQQE), and 1744–1799 (EIEA…AAKE). The tract at residues 365-398 (HDGVPGSVPQTPRANGSLLARPSSPFGTPASLRG) is disordered. The segment at 934-953 (AERLRPLPTPRAPAAAEQPS) is disordered. Residues 1159 to 1166 (ERRQRLEQ) carry the Nuclear localization signal motif. Over residues 1482–1503 (LATATEKNTSLQQQLAASSTEQ) the composition is skewed to polar residues. Disordered regions lie at residues 1482–1514 (LATATEKNTSLQQQLAASSTEQPAAAPVSAAPS) and 1567–1591 (SGGDVATAETSVSAQPSAGLSDEER). The segment covering 1504 to 1514 (PAAAPVSAAPS) has biased composition (low complexity). Positions 1574–1584 (AETSVSAQPSA) are enriched in polar residues. Positions 1816–2085 (KPPAPAQAPA…GGGGGGGGNQ (270 aa)) are disordered. Residues 1817-1827 (PPAPAQAPAPA) show a composition bias toward pro residues. Low complexity-rich tracts occupy residues 1843–1858 (VAPATAAPAAPAQAPS), 1910–1974 (QAGQ…PVPA), and 1982–1994 (ARTARGLYQAGPR). The span at 1995–2016 (GARGGRGGGFVGAGRGAGGAAG) shows a compositional bias: gly residues. Low complexity predominate over residues 2028–2040 (GGATATAAAAAAA). 2 stretches are compositionally biased toward gly residues: residues 2041–2051 (GGAGGSAGAGN) and 2076–2085 (GGGGGGGGNQ).

As to quaternary structure, the nuclear pore complex (NPC) constitutes the exclusive means of nucleocytoplasmic transport. NPCs allow the passive diffusion of ions and small molecules and the active, nuclear transport receptor-mediated bidirectional transport of macromolecules such as proteins, RNAs, ribonucleoparticles (RNPs), and ribosomal subunits across the nuclear envelope. The 55-60 MDa NPC is composed of at least 28 different subunits: AMO1, ELYS, GLE1, GLE2, MLP1, NDC1, NIC96, NSP1, NUP133, NUP145, NUP152, NUP159, NUP170, NUP188, NUP192, NUP37, NUP49, NUP53, NUP56, NUP57, NUP82, NUP84, NUP85, POM152, POM33, POM34, SEC13 and SEH1. Due to its 8-fold rotational symmetry, all subunits are present with 8 copies or multiples thereof.

The protein resides in the nucleus. Functionally, involved in the structural and functional organization of perinuclear chromatin. Associates with the nuclear pore complex and form filamentous structures along the nuclear periphery. This chain is Protein MLP1 homolog (MLP1), found in Chaetomium thermophilum (strain DSM 1495 / CBS 144.50 / IMI 039719) (Thermochaetoides thermophila).